A 522-amino-acid chain; its full sequence is tRNA-2-methylthio-N(6)-dimethylallyladenosine synthase (522 aa).

One can recognise an MTTase N-terminal domain in the interval 24-140 (RTYEVKTYGC…LPTLLQRAEH (117 aa)). [4Fe-4S] cluster-binding residues include Cys-33, Cys-69, Cys-103, Cys-177, Cys-181, and Cys-184. The region spanning 163-399 (RESAYAGWVS…MVVQEQVCEE (237 aa)) is the Radical SAM core domain. The 72-residue stretch at 402 to 473 (QKLIGTTVEL…PFFLIADSGV (72 aa)) folds into the TRAM domain.

Belongs to the methylthiotransferase family. MiaB subfamily. Monomer. [4Fe-4S] cluster is required as a cofactor.

Its subcellular location is the cytoplasm. The catalysed reaction is N(6)-dimethylallyladenosine(37) in tRNA + (sulfur carrier)-SH + AH2 + 2 S-adenosyl-L-methionine = 2-methylsulfanyl-N(6)-dimethylallyladenosine(37) in tRNA + (sulfur carrier)-H + 5'-deoxyadenosine + L-methionine + A + S-adenosyl-L-homocysteine + 2 H(+). Functionally, catalyzes the methylthiolation of N6-(dimethylallyl)adenosine (i(6)A), leading to the formation of 2-methylthio-N6-(dimethylallyl)adenosine (ms(2)i(6)A) at position 37 in tRNAs that read codons beginning with uridine. The polypeptide is tRNA-2-methylthio-N(6)-dimethylallyladenosine synthase (Corynebacterium glutamicum (strain ATCC 13032 / DSM 20300 / JCM 1318 / BCRC 11384 / CCUG 27702 / LMG 3730 / NBRC 12168 / NCIMB 10025 / NRRL B-2784 / 534)).